The following is a 373-amino-acid chain: Indole glucosinolate O-methyltransferase 1 (373 aa).

Residues G217, D240, D260, M261, and K274 each contribute to the S-adenosyl-L-homocysteine site. H278 acts as the Proton acceptor in catalysis.

It belongs to the class I-like SAM-binding methyltransferase superfamily. Cation-independent O-methyltransferase family. Interacts with B'GAMMA.

The protein operates within secondary metabolite biosynthesis. In terms of biological role, involved in indole glucosinolate biosynthesis. Catalyzes methoxylation reactions of the glucosinolate indole ring. Converts the hydroxy intermediates 4-hydroxy-indol-3-yl-methylglucosinolate (4OH-I3M) and 1-hydroxy-indol-3-yl-methylglucosinolate (1OH-I3M) to 4-methoxy-indol-3-yl-methylglucosinolate (4MO-I3M) and 1-methoxy-indol-3-yl-methylglucosinolate (1MO-I3M), respectively. This is Indole glucosinolate O-methyltransferase 1 from Arabidopsis thaliana (Mouse-ear cress).